A 399-amino-acid chain; its full sequence is Digeranylgeranylglycerophospholipid reductase (399 aa).

The FAD site is built by Gly-15, Glu-34, Cys-45, Ala-46, Gly-48, Arg-99, Ala-123, Asp-280, Gly-292, and Ile-293.

It belongs to the geranylgeranyl reductase family. DGGGPL reductase subfamily. It depends on FAD as a cofactor.

The catalysed reaction is a 2,3-bis-O-phytanyl-sn-glycerol 1-phospholipid + 8 oxidized 2[4Fe-4S]-[ferredoxin] = a 2,3-bis-O-(geranylgeranyl)-sn-glycerol 1-phospholipid + 8 reduced 2[4Fe-4S]-[ferredoxin] + 16 H(+). It carries out the reaction 2,3-bis-O-(phytanyl)-sn-glycerol 1-phosphate + 8 oxidized 2[4Fe-4S]-[ferredoxin] = 2,3-bis-O-(geranylgeranyl)-sn-glycerol 1-phosphate + 8 reduced 2[4Fe-4S]-[ferredoxin] + 16 H(+). It catalyses the reaction a 2,3-bis-O-phytanyl-sn-glycerol 1-phospholipid + 8 A = a 2,3-bis-O-(geranylgeranyl)-sn-glycerol 1-phospholipid + 8 AH2. The enzyme catalyses CDP-2,3-bis-O-(geranylgeranyl)-sn-glycerol + 8 AH2 = CDP-2,3-bis-O-(phytanyl)-sn-glycerol + 8 A. The catalysed reaction is archaetidylserine + 8 AH2 = 2,3-bis-O-phytanyl-sn-glycero-3-phospho-L-serine + 8 A. Its pathway is membrane lipid metabolism; glycerophospholipid metabolism. Functionally, is involved in the reduction of 2,3-digeranylgeranylglycerophospholipids (unsaturated archaeols) into 2,3-diphytanylglycerophospholipids (saturated archaeols) in the biosynthesis of archaeal membrane lipids. Catalyzes the formation of archaetidic acid (2,3-di-O-phytanyl-sn-glyceryl phosphate) from 2,3-di-O-geranylgeranylglyceryl phosphate (DGGGP) via the hydrogenation of each double bond of the isoprenoid chains. Is also probably able to reduce double bonds of geranyl groups in CDP-2,3-bis-O-(geranylgeranyl)-sn-glycerol and archaetidylserine, thus acting at various stages in the biosynthesis of archaeal membrane lipids. This Methanosphaerula palustris (strain ATCC BAA-1556 / DSM 19958 / E1-9c) protein is Digeranylgeranylglycerophospholipid reductase.